The sequence spans 427 residues: 3-phosphoshikimate 1-carboxyvinyltransferase (427 aa).

Residues Lys-22, Ser-23, and Arg-27 each contribute to the 3-phosphoshikimate site. Lys-22 serves as a coordination point for phosphoenolpyruvate. Residues Gly-96 and Arg-124 each coordinate phosphoenolpyruvate. The 3-phosphoshikimate site is built by Ser-169, Ser-170, Gln-171, Ser-197, Asp-313, Asn-336, and Lys-340. Residue Gln-171 participates in phosphoenolpyruvate binding. Asp-313 acts as the Proton acceptor in catalysis. 3 residues coordinate phosphoenolpyruvate: Arg-344, Arg-386, and Lys-411.

It belongs to the EPSP synthase family. In terms of assembly, monomer.

Its subcellular location is the cytoplasm. It carries out the reaction 3-phosphoshikimate + phosphoenolpyruvate = 5-O-(1-carboxyvinyl)-3-phosphoshikimate + phosphate. The protein operates within metabolic intermediate biosynthesis; chorismate biosynthesis; chorismate from D-erythrose 4-phosphate and phosphoenolpyruvate: step 6/7. In terms of biological role, catalyzes the transfer of the enolpyruvyl moiety of phosphoenolpyruvate (PEP) to the 5-hydroxyl of shikimate-3-phosphate (S3P) to produce enolpyruvyl shikimate-3-phosphate and inorganic phosphate. The polypeptide is 3-phosphoshikimate 1-carboxyvinyltransferase (Salmonella choleraesuis (strain SC-B67)).